The primary structure comprises 292 residues: Protein LicB (292 aa).

EamA domains are found at residues 70 to 139 (ALSG…LLAI) and 160 to 286 (LGWS…VTLY).

This is Protein LicB (licB) from Haemophilus influenzae (strain ATCC 51907 / DSM 11121 / KW20 / Rd).